The chain runs to 509 residues: Zinc finger CCCH-type with G patch domain-containing protein (509 aa).

The C3H1-type zinc-finger motif lies at Pro-155–Leu-178. Residues Glu-253 to Asp-277 form a disordered region. The G-patch domain occupies Thr-310–Glu-356. Residues Gly-409–Gln-430 are disordered. The span at Glu-411–Ala-420 shows a compositional bias: basic and acidic residues.

Its subcellular location is the nucleus. Functionally, transcription repressor. This is Zinc finger CCCH-type with G patch domain-containing protein from Drosophila persimilis (Fruit fly).